A 429-amino-acid polypeptide reads, in one-letter code: MSEPVIKSLLDTDMYKITMHAAVFTNFPDVTVTYKYTNRSSQLTFNKEAINWLKEQFSYLGNLRFTEEEIEYLKQEIPYLPSAYIKYISSSNYKLHPEEQISFTSEEIEGKPTHYKLKILVSGSWKDTILYEIPLLSLISEAYFKFVDIDWDYENQLEQAEKKAETLFDNGIRFSEFGTRRRRSLKAQDLIMQGIMKAVNGNPDRNKSLLLGTSNILFAKKYGVKPIGTVAHEWVMGVASISEDYLHANKNAMDCWINTFGAKNAGLALTDTFGTDDFLKSFRPPYSDAYVGVRQDSGDPVEYTKKISHHYHDVLKLPKFSKIICYSDSLNVEKAITYSHAAKENGMLATFGIGTNFTNDFRKKSEPQVKSEPLNIVIKLLEVNGNHAIKISDNLGKNMGDPATVKRVKEELGYTERSWSGDNEAHRWT.

3 residues coordinate nicotinate: Tyr15, Phe177, and Thr229. His232 bears the Phosphohistidine; by autocatalysis mark. Nicotinate is bound at residue Arg294. Thr355 contributes to the 5-phospho-alpha-D-ribose 1-diphosphate binding site.

This sequence belongs to the NAPRTase family. In terms of processing, transiently phosphorylated on a His residue during the reaction cycle. Phosphorylation strongly increases the affinity for substrates and increases the rate of nicotinate D-ribonucleotide production. Dephosphorylation regenerates the low-affinity form of the enzyme, leading to product release.

The protein localises to the cytoplasm. The protein resides in the nucleus. The catalysed reaction is nicotinate + 5-phospho-alpha-D-ribose 1-diphosphate + ATP + H2O = nicotinate beta-D-ribonucleotide + ADP + phosphate + diphosphate. The protein operates within cofactor biosynthesis; NAD(+) biosynthesis; nicotinate D-ribonucleotide from nicotinate: step 1/1. Catalyzes the first step in the biosynthesis of NAD from nicotinic acid, the ATP-dependent synthesis of beta-nicotinate D-ribonucleotide from nicotinate and 5-phospho-D-ribose 1-phosphate. Essential for growth under anaerobic conditions. The protein is Nicotinate phosphoribosyltransferase (NPT1) of Saccharomyces cerevisiae (strain ATCC 204508 / S288c) (Baker's yeast).